The primary structure comprises 366 residues: Carbamoyl phosphate synthase small chain (366 aa).

A CPSase region spans residues 1-171; sequence MLEKRYLVLE…KTPYVSTGSD (171 aa). Residues Ser-47, Gly-221, and Gly-223 each contribute to the L-glutamine site. Residues 173–360 enclose the Glutamine amidotransferase type-1 domain; sequence SVVLLDFGKK…ITMMKDFKEK (188 aa). Residue Cys-248 is the Nucleophile of the active site. Leu-249, Gln-252, Asn-290, Gly-292, and Tyr-293 together coordinate L-glutamine. Residues His-333 and Glu-335 contribute to the active site.

Belongs to the CarA family. Composed of two chains; the small (or glutamine) chain promotes the hydrolysis of glutamine to ammonia, which is used by the large (or ammonia) chain to synthesize carbamoyl phosphate. Tetramer of heterodimers (alpha,beta)4.

It catalyses the reaction hydrogencarbonate + L-glutamine + 2 ATP + H2O = carbamoyl phosphate + L-glutamate + 2 ADP + phosphate + 2 H(+). It carries out the reaction L-glutamine + H2O = L-glutamate + NH4(+). It functions in the pathway amino-acid biosynthesis; L-arginine biosynthesis; carbamoyl phosphate from bicarbonate: step 1/1. The protein operates within pyrimidine metabolism; UMP biosynthesis via de novo pathway; (S)-dihydroorotate from bicarbonate: step 1/3. Functionally, small subunit of the glutamine-dependent carbamoyl phosphate synthetase (CPSase). CPSase catalyzes the formation of carbamoyl phosphate from the ammonia moiety of glutamine, carbonate, and phosphate donated by ATP, constituting the first step of 2 biosynthetic pathways, one leading to arginine and/or urea and the other to pyrimidine nucleotides. The small subunit (glutamine amidotransferase) binds and cleaves glutamine to supply the large subunit with the substrate ammonia. The chain is Carbamoyl phosphate synthase small chain from Staphylococcus epidermidis (strain ATCC 35984 / DSM 28319 / BCRC 17069 / CCUG 31568 / BM 3577 / RP62A).